The chain runs to 287 residues: Formamidopyrimidine-DNA glycosylase (287 aa).

The Schiff-base intermediate with DNA role is filled by Pro2. Glu3 serves as the catalytic Proton donor. The active-site Proton donor; for beta-elimination activity is Lys61. 3 residues coordinate DNA: His95, Arg115, and Arg157. The segment at 243 to 277 adopts an FPG-type zinc-finger fold; that stretch reads NVYGRADQPCRRCGEPVRREAFMNRSSFSCPRCQP. Residue Arg267 is the Proton donor; for delta-elimination activity of the active site.

This sequence belongs to the FPG family. In terms of assembly, monomer. Requires Zn(2+) as cofactor.

It carries out the reaction Hydrolysis of DNA containing ring-opened 7-methylguanine residues, releasing 2,6-diamino-4-hydroxy-5-(N-methyl)formamidopyrimidine.. The enzyme catalyses 2'-deoxyribonucleotide-(2'-deoxyribose 5'-phosphate)-2'-deoxyribonucleotide-DNA = a 3'-end 2'-deoxyribonucleotide-(2,3-dehydro-2,3-deoxyribose 5'-phosphate)-DNA + a 5'-end 5'-phospho-2'-deoxyribonucleoside-DNA + H(+). Its function is as follows. Involved in base excision repair of DNA damaged by oxidation or by mutagenic agents. Acts as a DNA glycosylase that recognizes and removes damaged bases. Has a preference for oxidized purines, such as 7,8-dihydro-8-oxoguanine (8-oxoG). Has AP (apurinic/apyrimidinic) lyase activity and introduces nicks in the DNA strand. Cleaves the DNA backbone by beta-delta elimination to generate a single-strand break at the site of the removed base with both 3'- and 5'-phosphates. In Salinispora tropica (strain ATCC BAA-916 / DSM 44818 / JCM 13857 / NBRC 105044 / CNB-440), this protein is Formamidopyrimidine-DNA glycosylase.